The following is a 943-amino-acid chain: UvrABC system protein A (943 aa).

31-38 (GLSGSGKS) is a binding site for ATP. The C4-type zinc finger occupies 253 to 280 (CPHCGYSVPELEPRLFSFNNPAGACPTC). ABC transporter domains lie at 310-587 (WDRR…PNSI) and 607-937 (LDKK…RFLK). 640 to 647 (GVSGSGKS) provides a ligand contact to ATP. The segment at 740 to 766 (CEACQGDGVLKVEMHFLPDVYVPCDQC) adopts a C4-type zinc-finger fold.

It belongs to the ABC transporter superfamily. UvrA family. Forms a heterotetramer with UvrB during the search for lesions.

It localises to the cytoplasm. Its function is as follows. The UvrABC repair system catalyzes the recognition and processing of DNA lesions. UvrA is an ATPase and a DNA-binding protein. A damage recognition complex composed of 2 UvrA and 2 UvrB subunits scans DNA for abnormalities. When the presence of a lesion has been verified by UvrB, the UvrA molecules dissociate. The protein is UvrABC system protein A of Haemophilus influenzae (strain ATCC 51907 / DSM 11121 / KW20 / Rd).